The primary structure comprises 197 residues: Thymidine kinase (197 aa).

ATP-binding positions include 9–16 (SAMDAGKT) and 87–90 (DEIH). E88 acts as the Proton acceptor in catalysis. Positions 145, 147, 187, and 190 each coordinate Zn(2+).

It belongs to the thymidine kinase family. Homotetramer.

The protein resides in the cytoplasm. It carries out the reaction thymidine + ATP = dTMP + ADP + H(+). The polypeptide is Thymidine kinase (Francisella tularensis subsp. holarctica (strain LVS)).